The chain runs to 91 residues: UPF0298 protein M28_Spy0318 (91 aa).

Belongs to the UPF0298 family.

The protein resides in the cytoplasm. The protein is UPF0298 protein M28_Spy0318 of Streptococcus pyogenes serotype M28 (strain MGAS6180).